The sequence spans 115 residues: MSTRLLCWMALCLLGAELSEAEVAQSPRYKITEKSQAVAFWCDPISGHATLYWYRQILGQGPELLVQFQDESVVDDSQLPKDRFSAERLKGVDSTLKIQPAELGDSAMYLCASSL.

Residues 1-21 (MSTRLLCWMALCLLGAELSEA) form the signal peptide. An Ig-like domain is found at 22-115 (EVAQSPRYKI…SAMYLCASSL (94 aa)). Residues cysteine 42 and cysteine 111 are joined by a disulfide bond.

In terms of assembly, alpha-beta TR is a heterodimer composed of an alpha and beta chain; disulfide-linked. The alpha-beta TR is associated with the transmembrane signaling CD3 coreceptor proteins to form the TR-CD3 (TcR or TCR). The assembly of alpha-beta TR heterodimers with CD3 occurs in the endoplasmic reticulum where a single alpha-beta TR heterodimer associates with one CD3D-CD3E heterodimer, one CD3G-CD3E heterodimer and one CD247 homodimer forming a stable octameric structure. CD3D-CD3E and CD3G-CD3E heterodimers preferentially associate with TR alpha and TR beta chains, respectively. The association of the CD247 homodimer is the last step of TcR assembly in the endoplasmic reticulum and is required for transport to the cell surface.

The protein resides in the cell membrane. Its function is as follows. V region of the variable domain of T cell receptor (TR) beta chain that participates in the antigen recognition. Alpha-beta T cell receptors are antigen specific receptors which are essential to the immune response and are present on the cell surface of T lymphocytes. Recognize peptide-major histocompatibility (MH) (pMH) complexes that are displayed by antigen presenting cells (APC), a prerequisite for efficient T cell adaptive immunity against pathogens. Binding of alpha-beta TR to pMH complex initiates TR-CD3 clustering on the cell surface and intracellular activation of LCK that phosphorylates the ITAM motifs of CD3G, CD3D, CD3E and CD247 enabling the recruitment of ZAP70. In turn ZAP70 phosphorylates LAT, which recruits numerous signaling molecules to form the LAT signalosome. The LAT signalosome propagates signal branching to three major signaling pathways, the calcium, the mitogen-activated protein kinase (MAPK) kinase and the nuclear factor NF-kappa-B (NF-kB) pathways, leading to the mobilization of transcription factors that are critical for gene expression and essential for T cell growth and differentiation. The T cell repertoire is generated in the thymus, by V-(D)-J rearrangement. This repertoire is then shaped by intrathymic selection events to generate a peripheral T cell pool of self-MH restricted, non-autoaggressive T cells. Post-thymic interaction of alpha-beta TR with the pMH complexes shapes TR structural and functional avidity. This chain is T cell receptor beta variable 11-1, found in Homo sapiens (Human).